A 212-amino-acid polypeptide reads, in one-letter code: Agamous-like MADS-box protein MADS9 (212 aa).

The MADS-box domain occupies methionine 1 to serine 61. The 87-residue stretch at histidine 84 to proline 170 folds into the K-box domain.

In terms of tissue distribution, expressed during flower development in stamens and petals.

The protein localises to the nucleus. Functionally, probable transcription factor that may play role in specifying stamen and petal organ identity. In Vitis vinifera (Grape), this protein is Agamous-like MADS-box protein MADS9.